The primary structure comprises 1228 residues: MGRLLRLEVENFKSYRGHQIIGPFEDFTSIIGPNGAGKSNLMDAISFVLGVKSSHLRSTNVKELIYRGKILQRDNTDFTDSSNPTTAYVKLMYELDNGEQREYKRAITPSGATEYKIDEEIVTFSEYCGSLQKENILVRARNFLVFQGDVETIASQSPLELSKLVEQISGSLEYKSEYDKSKDEQDKAVNLSAHSFNKKRGINAELRQYQEQKTEAERYQSQKEKRDSAQLVYLLWKLFHLEKSISSNMAEVTRLKADSIQLIERRDENTKEIEKLKEKEGSIRRNLLAFDRKVRKQEKLIASKRPELISIAEKALESKSNLRKIQRKAAEIEKDYSDQASTLQVLENQLTSLSAAEKEFLKDMQEKEQLKGLRLLPEDKEEYEGLRSEADKLNSNLLFKLQTLNRNIKVTSQSKDSLTSIVGDLESKIKSLHESVSSLDTERADLLAKINEKIESLELEKHDQQKKRLTYSELFHKTQELNEELQSCLQKILEASADRNESKQDAKKREALYALKRIYPEVKGRIIDLCTPTQKKYESAIAAALGKNFDAIVVETQAVAKECIDYIKEQRIGIMTFFPMDTIAASPVNQKFRGTHKGARLAIDVLNFESEYERVMISAVGNTLICDSMTVARDLSYNKRLNAKTVTLEGTVIHKTGLITGGSSNNRSAKHWDDHDFDLLTQTKDRLMHQIGEIEYQKSSCVITESDTVKLHSLESEISLLKDKYTVVSRSVEDKKKEIGHYESLIKEKQPHLSELEMELRNFVKSRDELQIQVEKVEEKIFSGFCKRIGISDIHTYDEIHRTFTQSFTQKQLEFTKQKSLLENRISFEKQRVSDTRLRLERMHKFIEKDQESIDNYEQNREALESEVATAEAELELLKEDFASENSKTEKILLAASEKKLVGKRLVSELTKLSGNITLLESEIDRYVSEWHAILRKCKLEDIDVPLREGSLTSIPIDDVSNSGDITMGEEPSEPVINFEKFGVEVDYDELDEELRNDGSESMASVLQEKLREYSEELDQMSPNLRAIERLETVETRLAKLDEEFAAARKAAKNAKERFNAVKQKRLQKFQAAFSHISEQIDPIYKELTKSPAFPLGGTAYLTLDDLDEPYLGGIKFHAMPPMKRFRDMDQLSGGEKTMAALALLFAIHSYQPSPFFVLDEIDAALDQTNVTKIANYIRQHASSGFQFVVISLKNQLFSKSEALVGIYRDQQENSSRTLSINLEGYVE.

32–39 (GPNGAGKS) is a binding site for ATP. Residues 197-510 (NKKRGINAEL…ESKQDAKKRE (314 aa)) are a coiled coil. The SMC hinge domain maps to 522–635 (VKGRIIDLCT…CDSMTVARDL (114 aa)). Coiled-coil stretches lie at residues 710 to 783 (KLHS…KIFS), 814 to 926 (EFTK…EIDR), and 984 to 1068 (VEVD…KRLQ).

It belongs to the SMC family. SMC1 subfamily. In terms of assembly, cohesin complexes are composed of the psm1/smc1 and psm3/smc3 heterodimer attached via their SMC hinge domain, rad21/scc1 which link them, and psc3/scc3, which interacts with rad21.

The protein resides in the nucleus. The protein localises to the chromosome. Its function is as follows. Involved in chromosome cohesion during cell cycle and in DNA repair. Central component of cohesin complex. The cohesin complex is required for the cohesion of sister chromatids after DNA replication. The cohesin complex apparently forms a large proteinaceous ring within which sister chromatids can be trapped. At anaphase, the complex is cleaved and dissociates from chromatin, allowing sister chromatids to segregate. This chain is Structural maintenance of chromosomes protein 1 (psm1), found in Schizosaccharomyces pombe (strain 972 / ATCC 24843) (Fission yeast).